Consider the following 234-residue polypeptide: Carboxy-S-adenosyl-L-methionine synthase (234 aa).

S-adenosyl-L-methionine is bound by residues tyrosine 35, 60–62 (GSS), 83–84 (DN), asparagine 124, and arginine 191.

This sequence belongs to the class I-like SAM-binding methyltransferase superfamily. Cx-SAM synthase family. Homodimer.

It catalyses the reaction prephenate + S-adenosyl-L-methionine = carboxy-S-adenosyl-L-methionine + 3-phenylpyruvate + H2O. Its function is as follows. Catalyzes the conversion of S-adenosyl-L-methionine (SAM) to carboxy-S-adenosyl-L-methionine (Cx-SAM). This chain is Carboxy-S-adenosyl-L-methionine synthase, found in Nautilia profundicola (strain ATCC BAA-1463 / DSM 18972 / AmH).